The primary structure comprises 203 residues: ADP-ribosylation factor-like protein 6-interacting protein 1 (203 aa).

The Cytoplasmic segment spans residues 1-41 (MAEGDNRSSNLLAVETASLEEQLQGWGEVMLMADKVLRWER). A helical membrane pass occupies residues 42–62 (AWFPPAIMGVVSLLFLIIYYL). Residues 63 to 65 (DPS) lie on the Lumenal side of the membrane. A helical transmembrane segment spans residues 66-86 (VLSGVSCFVMFLCLADYLVPI). Over 87–133 (LAPRIFGSNKWTTEQQQRFHEICSNLVKTRRRAVGWWKRLFSLKEEK) the chain is Cytoplasmic. The chain crosses the membrane as a helical span at residues 134–175 (PKMYFMTMIISLAAVAWVGQQVHNLLLTYLIVTFVLLLPGLN). Topologically, residues 176 to 203 (QHGIILKYIGMAKREINKLLKQKEKKNE) are lumenal.

This sequence belongs to the ARL6ip family. In terms of assembly, homooligomer. Heterodimer with ARL6IP5. Interacts with ARL6. Interacts with TMEM33. Interacts with ATL1. Expressed in the cerebral cortex, cerebellum, hippocampus, olfactory bulbs, medulla oblongate and limbic system (at protein level). Ubiquitous. Expressed in all hematopoietic cell lineages, with highest levels in early myeloid progenitor cells.

The protein localises to the endomembrane system. It is found in the endoplasmic reticulum membrane. The protein resides in the endoplasmic reticulum. Functionally, positively regulates SLC1A1/EAAC1-mediated glutamate transport by increasing its affinity for glutamate in a PKC activity-dependent manner. Promotes the catalytic efficiency of SLC1A1/EAAC1 probably by reducing its interaction with ARL6IP5, a negative regulator of SLC1A1/EAAC1-mediated glutamate transport. Plays a role in the formation and stabilization of endoplasmic reticulum tubules. Negatively regulates apoptosis, possibly by modulating the activity of caspase-9 (CASP9). Inhibits cleavage of CASP9-dependent substrates and downstream markers of apoptosis but not CASP9 itself. May be involved in protein transport, membrane trafficking, or cell signaling during hematopoietic maturation. In Mus musculus (Mouse), this protein is ADP-ribosylation factor-like protein 6-interacting protein 1 (Arl6ip1).